The primary structure comprises 364 residues: MAQQTPLYEQHTLCGARMVDFHGWMMPLHYGSQIDEHHAVRTDAGMFDVSHMTIVDLRGSRTREFLRYLLANDVAKLTKSGKALYSGMLNASGGVIDDLIVYYFTEDFFRLVVNSATREKDLSWITQHAEPFGIEITVRDDLSMIAVQGPNAQAKAATLFNDAQRQAVEGMKPFFGVQAGDLFIATTGYTGEAGYEIALPNEKAADFWRALVEAGVKPCGLGARDTLRLEAGMNLYSQEMDETISPLAANMGWTIAWEPADRDFIGREALEAQREHGTEKLVGLVMTEKGVLRNELPVRFTDAQGNQHEGIITSGTFSPTLGYSIALARVPEGIGETAIVQIRNREMPVKVTKPVFVRNGKAVA.

Belongs to the GcvT family. The glycine cleavage system is composed of four proteins: P, T, L and H.

It carries out the reaction N(6)-[(R)-S(8)-aminomethyldihydrolipoyl]-L-lysyl-[protein] + (6S)-5,6,7,8-tetrahydrofolate = N(6)-[(R)-dihydrolipoyl]-L-lysyl-[protein] + (6R)-5,10-methylene-5,6,7,8-tetrahydrofolate + NH4(+). In terms of biological role, the glycine cleavage system catalyzes the degradation of glycine. This Escherichia coli O127:H6 (strain E2348/69 / EPEC) protein is Aminomethyltransferase.